The sequence spans 156 residues: Ribosomal RNA large subunit methyltransferase H (156 aa).

S-adenosyl-L-methionine is bound by residues L73, G104, and 123–128 (LGALTL).

It belongs to the RNA methyltransferase RlmH family. Homodimer.

It localises to the cytoplasm. It carries out the reaction pseudouridine(1915) in 23S rRNA + S-adenosyl-L-methionine = N(3)-methylpseudouridine(1915) in 23S rRNA + S-adenosyl-L-homocysteine + H(+). In terms of biological role, specifically methylates the pseudouridine at position 1915 (m3Psi1915) in 23S rRNA. The sequence is that of Ribosomal RNA large subunit methyltransferase H from Dichelobacter nodosus (strain VCS1703A).